Reading from the N-terminus, the 427-residue chain is Glutamate-1-semialdehyde 2,1-aminomutase (427 aa).

Lys265 bears the N6-(pyridoxal phosphate)lysine mark.

Belongs to the class-III pyridoxal-phosphate-dependent aminotransferase family. HemL subfamily. In terms of assembly, homodimer. Requires pyridoxal 5'-phosphate as cofactor.

It is found in the cytoplasm. The enzyme catalyses (S)-4-amino-5-oxopentanoate = 5-aminolevulinate. It participates in porphyrin-containing compound metabolism; protoporphyrin-IX biosynthesis; 5-aminolevulinate from L-glutamyl-tRNA(Glu): step 2/2. In Pseudomonas aeruginosa (strain UCBPP-PA14), this protein is Glutamate-1-semialdehyde 2,1-aminomutase.